The primary structure comprises 886 residues: Isoleucine--tRNA ligase (886 aa).

Residues 60–70 (PYANGDIHIGH) carry the 'HIGH' region motif. E546 is an L-isoleucyl-5'-AMP binding site. The 'KMSKS' region signature appears at 587-591 (KMSKS). K590 is a binding site for ATP. Residues C856, C859, C870, and C873 each contribute to the Zn(2+) site.

Belongs to the class-I aminoacyl-tRNA synthetase family. IleS type 1 subfamily. In terms of assembly, monomer. Zn(2+) serves as cofactor.

The protein resides in the cytoplasm. The enzyme catalyses tRNA(Ile) + L-isoleucine + ATP = L-isoleucyl-tRNA(Ile) + AMP + diphosphate. Functionally, catalyzes the attachment of isoleucine to tRNA(Ile). As IleRS can inadvertently accommodate and process structurally similar amino acids such as valine, to avoid such errors it has two additional distinct tRNA(Ile)-dependent editing activities. One activity is designated as 'pretransfer' editing and involves the hydrolysis of activated Val-AMP. The other activity is designated 'posttransfer' editing and involves deacylation of mischarged Val-tRNA(Ile). This chain is Isoleucine--tRNA ligase, found in Mesomycoplasma hyopneumoniae (strain 232) (Mycoplasma hyopneumoniae).